A 328-amino-acid polypeptide reads, in one-letter code: Methionyl-tRNA formyltransferase (328 aa).

110 to 113 provides a ligand contact to (6S)-5,6,7,8-tetrahydrofolate; sequence SLLP.

Belongs to the Fmt family.

The enzyme catalyses L-methionyl-tRNA(fMet) + (6R)-10-formyltetrahydrofolate = N-formyl-L-methionyl-tRNA(fMet) + (6S)-5,6,7,8-tetrahydrofolate + H(+). Its function is as follows. Attaches a formyl group to the free amino group of methionyl-tRNA(fMet). The formyl group appears to play a dual role in the initiator identity of N-formylmethionyl-tRNA by promoting its recognition by IF2 and preventing the misappropriation of this tRNA by the elongation apparatus. The chain is Methionyl-tRNA formyltransferase from Prochlorococcus marinus (strain MIT 9215).